The chain runs to 255 residues: Hydroxyacylglutathione hydrolase (255 aa).

Positions 56, 58, 60, 61, 114, 133, and 171 each coordinate Zn(2+).

This sequence belongs to the metallo-beta-lactamase superfamily. Glyoxalase II family. In terms of assembly, monomer. Requires Zn(2+) as cofactor.

The enzyme catalyses an S-(2-hydroxyacyl)glutathione + H2O = a 2-hydroxy carboxylate + glutathione + H(+). Its pathway is secondary metabolite metabolism; methylglyoxal degradation; (R)-lactate from methylglyoxal: step 2/2. Its function is as follows. Thiolesterase that catalyzes the hydrolysis of S-D-lactoyl-glutathione to form glutathione and D-lactic acid. The chain is Hydroxyacylglutathione hydrolase from Cereibacter sphaeroides (strain ATCC 17025 / ATH 2.4.3) (Rhodobacter sphaeroides).